We begin with the raw amino-acid sequence, 336 residues long: Filaggrin (336 aa).

The disordered stretch occupies residues 1–313 (PDGSGRSSNR…GVQGAAASGQ (313 aa)). Composition is skewed to low complexity over residues 16–26 (QLSPSQSSDSQ), 40–66 (SSSANRRAGSSSGSGVQGASAGGLAAD), and 73–98 (ARQGQASAQGRAGSQGQAQGRVSSSA). Basic and acidic residues-rich tracts occupy residues 100–120 (RQGRRGVSESRASDSEGHSDF), 163–176 (DSQHQHGHQHEQQR), and 184–195 (HQHEHEQPESGH). The span at 285-311 (AQRGQSSSANRRAGSSSGSGVQGAAAS) shows a compositional bias: low complexity.

Belongs to the S100-fused protein family. In terms of processing, filaggrin is initially synthesized as a large, insoluble, highly phosphorylated precursor containing many tandem copies of 248 AA, which are not separated by large linker sequences. During terminal differentiation it is dephosphorylated and proteolytically cleaved. As to expression, expressed in the granular layer of the epidermis (at protein level). Expressed in the epidermis of the ear (at protein level).

It is found in the cytoplasmic granule. Its function is as follows. Aggregates keratin intermediate filaments and promotes disulfide-bond formation among the intermediate filaments during terminal differentiation of mammalian epidermis. The polypeptide is Filaggrin (Flg) (Mus musculus (Mouse)).